The chain runs to 862 residues: Leucine--tRNA ligase (862 aa).

The 'HIGH' region signature appears at 51 to 61; the sequence is PYPSGSLHMGH. The 'KMSKS' region motif lies at 624-628; sequence KMSKS. Position 627 (K627) interacts with ATP.

It belongs to the class-I aminoacyl-tRNA synthetase family.

Its subcellular location is the cytoplasm. The catalysed reaction is tRNA(Leu) + L-leucine + ATP = L-leucyl-tRNA(Leu) + AMP + diphosphate. The polypeptide is Leucine--tRNA ligase (Prochlorococcus marinus (strain NATL2A)).